A 149-amino-acid chain; its full sequence is Arginine repressor (149 aa).

Belongs to the ArgR family.

It is found in the cytoplasm. It participates in amino-acid biosynthesis; L-arginine biosynthesis [regulation]. In terms of biological role, regulates arginine biosynthesis genes. In Exiguobacterium sp. (strain ATCC BAA-1283 / AT1b), this protein is Arginine repressor.